A 610-amino-acid chain; its full sequence is Elongation factor 4 (610 aa).

In terms of domain architecture, tr-type G spans 13 to 195 (SHIRNFSIVA…AIVHKLPAPK (183 aa)). Residues 25–30 (DHGKST) and 142–145 (NKID) contribute to the GTP site.

The protein belongs to the TRAFAC class translation factor GTPase superfamily. Classic translation factor GTPase family. LepA subfamily.

It localises to the cell inner membrane. The enzyme catalyses GTP + H2O = GDP + phosphate + H(+). Its function is as follows. Required for accurate and efficient protein synthesis under certain stress conditions. May act as a fidelity factor of the translation reaction, by catalyzing a one-codon backward translocation of tRNAs on improperly translocated ribosomes. Back-translocation proceeds from a post-translocation (POST) complex to a pre-translocation (PRE) complex, thus giving elongation factor G a second chance to translocate the tRNAs correctly. Binds to ribosomes in a GTP-dependent manner. This is Elongation factor 4 from Rhizobium etli (strain ATCC 51251 / DSM 11541 / JCM 21823 / NBRC 15573 / CFN 42).